We begin with the raw amino-acid sequence, 182 residues long: Adenine phosphoribosyltransferase (182 aa).

The protein belongs to the purine/pyrimidine phosphoribosyltransferase family. Homodimer.

Its subcellular location is the cytoplasm. It catalyses the reaction AMP + diphosphate = 5-phospho-alpha-D-ribose 1-diphosphate + adenine. Its pathway is purine metabolism; AMP biosynthesis via salvage pathway; AMP from adenine: step 1/1. Catalyzes a salvage reaction resulting in the formation of AMP, that is energically less costly than de novo synthesis. This chain is Adenine phosphoribosyltransferase, found in Pseudomonas putida (strain GB-1).